Reading from the N-terminus, the 226-residue chain is ATP synthase subunit a (226 aa).

The next 6 membrane-spanning stretches (helical) occupy residues 17-37, 79-99, 105-125, 134-154, 176-196, and 199-219; these read FSYF…AMMA, LVAT…IPGF, SLNL…FEGI, FAHF…IEIV, LFLM…AYVL, and FMAF…LAGA.

This sequence belongs to the ATPase A chain family. In terms of assembly, F-type ATPases have 2 components, CF(1) - the catalytic core - and CF(0) - the membrane proton channel. CF(1) has five subunits: alpha(3), beta(3), gamma(1), delta(1), epsilon(1). CF(0) has three main subunits: a(1), b(2) and c(9-12). The alpha and beta chains form an alternating ring which encloses part of the gamma chain. CF(1) is attached to CF(0) by a central stalk formed by the gamma and epsilon chains, while a peripheral stalk is formed by the delta and b chains.

The protein localises to the cell inner membrane. Functionally, key component of the proton channel; it plays a direct role in the translocation of protons across the membrane. The protein is ATP synthase subunit a of Campylobacter jejuni subsp. jejuni serotype O:6 (strain 81116 / NCTC 11828).